We begin with the raw amino-acid sequence, 442 residues long: Tubulin beta chain (442 aa).

GTP-binding residues include Q11, E67, S136, G140, T141, G142, and N202. E67 provides a ligand contact to Mg(2+).

The protein belongs to the tubulin family. In terms of assembly, dimer of alpha and beta chains. A typical microtubule is a hollow water-filled tube with an outer diameter of 25 nm and an inner diameter of 15 nM. Alpha-beta heterodimers associate head-to-tail to form protofilaments running lengthwise along the microtubule wall with the beta-tubulin subunit facing the microtubule plus end conferring a structural polarity. Microtubules usually have 13 protofilaments but different protofilament numbers can be found in some organisms and specialized cells. Mg(2+) is required as a cofactor.

The protein resides in the cytoplasm. It localises to the cytoskeleton. In terms of biological role, tubulin is the major constituent of microtubules, a cylinder consisting of laterally associated linear protofilaments composed of alpha- and beta-tubulin heterodimers. Microtubules grow by the addition of GTP-tubulin dimers to the microtubule end, where a stabilizing cap forms. Below the cap, tubulin dimers are in GDP-bound state, owing to GTPase activity of alpha-tubulin. This Euglena gracilis protein is Tubulin beta chain (TUBB).